Here is a 95-residue protein sequence, read N- to C-terminus: Co-chaperonin GroES (95 aa).

It belongs to the GroES chaperonin family. As to quaternary structure, heptamer of 7 subunits arranged in a ring. Interacts with the chaperonin GroEL.

The protein localises to the cytoplasm. Functionally, together with the chaperonin GroEL, plays an essential role in assisting protein folding. The GroEL-GroES system forms a nano-cage that allows encapsulation of the non-native substrate proteins and provides a physical environment optimized to promote and accelerate protein folding. GroES binds to the apical surface of the GroEL ring, thereby capping the opening of the GroEL channel. The polypeptide is Co-chaperonin GroES (Desulfosudis oleivorans (strain DSM 6200 / JCM 39069 / Hxd3) (Desulfococcus oleovorans)).